We begin with the raw amino-acid sequence, 184 residues long: ATP synthase subunit b (184 aa).

A helical transmembrane segment spans residues 19–39 (IIVGVILVLLLTWLIAKAVVP).

It belongs to the ATPase B chain family. As to quaternary structure, F-type ATPases have 2 components, F(1) - the catalytic core - and F(0) - the membrane proton channel. F(1) has five subunits: alpha(3), beta(3), gamma(1), delta(1), epsilon(1). F(0) has three main subunits: a(1), b(2) and c(10-14). The alpha and beta chains form an alternating ring which encloses part of the gamma chain. F(1) is attached to F(0) by a central stalk formed by the gamma and epsilon chains, while a peripheral stalk is formed by the delta and b chains.

The protein resides in the cell membrane. Its function is as follows. F(1)F(0) ATP synthase produces ATP from ADP in the presence of a proton or sodium gradient. F-type ATPases consist of two structural domains, F(1) containing the extramembraneous catalytic core and F(0) containing the membrane proton channel, linked together by a central stalk and a peripheral stalk. During catalysis, ATP synthesis in the catalytic domain of F(1) is coupled via a rotary mechanism of the central stalk subunits to proton translocation. Functionally, component of the F(0) channel, it forms part of the peripheral stalk, linking F(1) to F(0). This Cutibacterium acnes (strain DSM 16379 / KPA171202) (Propionibacterium acnes) protein is ATP synthase subunit b.